We begin with the raw amino-acid sequence, 306 residues long: Protein YIPF1 (306 aa).

Over M1–D119 the chain is Cytoplasmic. The interval I30–E63 is disordered. Positions E50 to E63 are enriched in acidic residues. A helical membrane pass occupies residues L120 to L140. The Lumenal portion of the chain corresponds to S141–S162. The chain crosses the membrane as a helical span at residues I163–L183. Residues L184–E200 are Cytoplasmic-facing. Residues I201–I221 traverse the membrane as a helical segment. The Lumenal portion of the chain corresponds to P222 to R227. Residues W228–P248 form a helical membrane-spanning segment. The Cytoplasmic segment spans residues A249 to R256. A helical membrane pass occupies residues V257 to L277. Residues A278–S306 lie on the Lumenal side of the membrane. N297 carries an N-linked (GlcNAc...) asparagine glycan.

Belongs to the YIP1 family. In terms of assembly, interacts with YIPF6; this interaction may stabilize YIPF1. May also form a ternary complex with YIPF2 and YIPF6.

The protein localises to the golgi apparatus. It is found in the cis-Golgi network membrane. The protein resides in the trans-Golgi network membrane. It localises to the late endosome membrane. In Mus musculus (Mouse), this protein is Protein YIPF1 (Yipf1).